The chain runs to 560 residues: NAD-dependent malic enzyme (560 aa).

Residue Tyr-100 is the Proton donor of the active site. An NAD(+)-binding site is contributed by Arg-153. Lys-171 functions as the Proton acceptor in the catalytic mechanism. A divalent metal cation contacts are provided by Glu-242, Asp-243, and Asp-266. NAD(+) contacts are provided by Asp-266 and Asn-413.

This sequence belongs to the malic enzymes family. In terms of assembly, homotetramer. Mg(2+) is required as a cofactor. Mn(2+) serves as cofactor.

The catalysed reaction is (S)-malate + NAD(+) = pyruvate + CO2 + NADH. It catalyses the reaction oxaloacetate + H(+) = pyruvate + CO2. This chain is NAD-dependent malic enzyme, found in Psychrobacter arcticus (strain DSM 17307 / VKM B-2377 / 273-4).